A 69-amino-acid chain; its full sequence is Snake venom metalloproteinase BnP2 (69 aa).

The Peptidase M12B domain maps to 1–69; that stretch reads YIELAVVADH…EWRERDIIPR (69 aa). Ca(2+) is bound at residue glutamate 3.

The protein belongs to the venom metalloproteinase (M12B) family. P-I subfamily. Monomer. Requires Zn(2+) as cofactor. Expressed by the venom gland.

It localises to the secreted. With respect to regulation, inhibited by EDTA. Its function is as follows. This protein is a zinc protease from snake venom that is devoid of significant myotoxic and hemorrhagic activities. It hydrolyzes the Aalpha-chain and more slowly the Bbeta-chain of fibrin and fibrinogen, without affecting the gamma-chains. It induces cell detachment and a apoptosis (anoikis) in endothelial cells. The sequence is that of Snake venom metalloproteinase BnP2 from Bothrops pauloensis (Neuwied's lancehead).